Consider the following 384-residue polypeptide: Carbamoyl phosphate synthase small chain (384 aa).

The segment at 1 to 189 is CPSase; the sequence is MSKSALLVLE…GLPEAKDDSE (189 aa). Residues S47, G241, and G243 each contribute to the L-glutamine site. A Glutamine amidotransferase type-1 domain is found at 193-380; that stretch reads HVVAYDFGAK…IELIKLSVNE (188 aa). C269 serves as the catalytic Nucleophile. 5 residues coordinate L-glutamine: L270, Q273, N311, G313, and F314. Active-site residues include H353 and E355.

Belongs to the CarA family. Composed of two chains; the small (or glutamine) chain promotes the hydrolysis of glutamine to ammonia, which is used by the large (or ammonia) chain to synthesize carbamoyl phosphate. Tetramer of heterodimers (alpha,beta)4.

The catalysed reaction is hydrogencarbonate + L-glutamine + 2 ATP + H2O = carbamoyl phosphate + L-glutamate + 2 ADP + phosphate + 2 H(+). The enzyme catalyses L-glutamine + H2O = L-glutamate + NH4(+). The protein operates within amino-acid biosynthesis; L-arginine biosynthesis; carbamoyl phosphate from bicarbonate: step 1/1. It functions in the pathway pyrimidine metabolism; UMP biosynthesis via de novo pathway; (S)-dihydroorotate from bicarbonate: step 1/3. Its function is as follows. Small subunit of the glutamine-dependent carbamoyl phosphate synthetase (CPSase). CPSase catalyzes the formation of carbamoyl phosphate from the ammonia moiety of glutamine, carbonate, and phosphate donated by ATP, constituting the first step of 2 biosynthetic pathways, one leading to arginine and/or urea and the other to pyrimidine nucleotides. The small subunit (glutamine amidotransferase) binds and cleaves glutamine to supply the large subunit with the substrate ammonia. This chain is Carbamoyl phosphate synthase small chain, found in Photobacterium profundum (strain SS9).